Consider the following 737-residue polypeptide: Phosphoribosylformylglycinamidine synthase subunit PurL (737 aa).

Residue His-48 is part of the active site. ATP-binding residues include Tyr-51 and Lys-90. A Mg(2+)-binding site is contributed by Glu-92. Substrate-binding positions include 93–96 (SHNH) and Arg-115. Catalysis depends on His-94, which acts as the Proton acceptor. A Mg(2+)-binding site is contributed by Asp-116. Gln-244 lines the substrate pocket. Residue Asp-272 coordinates Mg(2+). 316 to 318 (ESQ) is a binding site for substrate. The ATP site is built by Asp-500 and Gly-537. Asn-538 is a binding site for Mg(2+). Residue Ser-540 participates in substrate binding.

This sequence belongs to the FGAMS family. In terms of assembly, monomer. Part of the FGAM synthase complex composed of 1 PurL, 1 PurQ and 2 PurS subunits.

The protein resides in the cytoplasm. The enzyme catalyses N(2)-formyl-N(1)-(5-phospho-beta-D-ribosyl)glycinamide + L-glutamine + ATP + H2O = 2-formamido-N(1)-(5-O-phospho-beta-D-ribosyl)acetamidine + L-glutamate + ADP + phosphate + H(+). The protein operates within purine metabolism; IMP biosynthesis via de novo pathway; 5-amino-1-(5-phospho-D-ribosyl)imidazole from N(2)-formyl-N(1)-(5-phospho-D-ribosyl)glycinamide: step 1/2. Its function is as follows. Part of the phosphoribosylformylglycinamidine synthase complex involved in the purines biosynthetic pathway. Catalyzes the ATP-dependent conversion of formylglycinamide ribonucleotide (FGAR) and glutamine to yield formylglycinamidine ribonucleotide (FGAM) and glutamate. The FGAM synthase complex is composed of three subunits. PurQ produces an ammonia molecule by converting glutamine to glutamate. PurL transfers the ammonia molecule to FGAR to form FGAM in an ATP-dependent manner. PurS interacts with PurQ and PurL and is thought to assist in the transfer of the ammonia molecule from PurQ to PurL. The sequence is that of Phosphoribosylformylglycinamidine synthase subunit PurL from Sulfurimonas denitrificans (strain ATCC 33889 / DSM 1251) (Thiomicrospira denitrificans (strain ATCC 33889 / DSM 1251)).